A 149-amino-acid chain; its full sequence is 3-hydroxyacyl-[acyl-carrier-protein] dehydratase FabZ (149 aa).

Residue His-53 is part of the active site.

It belongs to the thioester dehydratase family. FabZ subfamily.

Its subcellular location is the cytoplasm. The enzyme catalyses a (3R)-hydroxyacyl-[ACP] = a (2E)-enoyl-[ACP] + H2O. Involved in unsaturated fatty acids biosynthesis. Catalyzes the dehydration of short chain beta-hydroxyacyl-ACPs and long chain saturated and unsaturated beta-hydroxyacyl-ACPs. The polypeptide is 3-hydroxyacyl-[acyl-carrier-protein] dehydratase FabZ (Neisseria meningitidis serogroup B (strain ATCC BAA-335 / MC58)).